The following is a 189-amino-acid chain: Small ribosomal subunit protein uS5 (189 aa).

An S5 DRBM domain is found at 22–85 (FVDKLVAINR…EAAKRELIFV (64 aa)).

The protein belongs to the universal ribosomal protein uS5 family. As to quaternary structure, part of the 30S ribosomal subunit. Contacts proteins S4 and S8.

Its function is as follows. With S4 and S12 plays an important role in translational accuracy. In terms of biological role, located at the back of the 30S subunit body where it stabilizes the conformation of the head with respect to the body. This chain is Small ribosomal subunit protein uS5, found in Rhizobium johnstonii (strain DSM 114642 / LMG 32736 / 3841) (Rhizobium leguminosarum bv. viciae).